The chain runs to 135 residues: Fluoride-specific ion channel FluC (135 aa).

4 consecutive transmembrane segments (helical) span residues 7–27 (IAAISLGASLGALARYGLGLA), 37–57 (IGTLAANLIAAYVVGVTIAYV), 70–90 (FMITGLAGGLSTFSTFTAELF), and 105–125 (LGLHVGGSLALLMLGMLTIGL). Positions 77 and 80 each coordinate Na(+).

Belongs to the fluoride channel Fluc/FEX (TC 1.A.43) family.

It localises to the cell inner membrane. It carries out the reaction fluoride(in) = fluoride(out). Its activity is regulated as follows. Na(+) is not transported, but it plays an essential structural role and its presence is essential for fluoride channel function. Its function is as follows. Fluoride-specific ion channel. Important for reducing fluoride concentration in the cell, thus reducing its toxicity. This Xanthomonas oryzae pv. oryzae (strain MAFF 311018) protein is Fluoride-specific ion channel FluC.